A 180-amino-acid polypeptide reads, in one-letter code: Putative peroxiredoxin YkuU (180 aa).

The Thioredoxin domain occupies 4-165; the sequence is RMVGKQAPRF…TLRVLQALQT (162 aa). Catalysis depends on C52, which acts as the Cysteine sulfenic acid (-SOH) intermediate.

This sequence belongs to the peroxiredoxin family. AhpC/Prx1 subfamily. Homodimer; disulfide-linked, upon oxidation.

It is found in the cytoplasm. The enzyme catalyses a hydroperoxide + [protein]-dithiol = [protein]-disulfide + an alcohol + H2O. Thiol-specific peroxidase that catalyzes the reduction of hydrogen peroxide and organic hydroperoxides to water and alcohols, respectively. Plays a role in cell protection against oxidative stress by detoxifying peroxides. This chain is Putative peroxiredoxin YkuU (ykuU), found in Bacillus subtilis (strain 168).